We begin with the raw amino-acid sequence, 208 residues long: Attacin-A (208 aa).

An N-terminal signal peptide occupies residues 1 to 20; sequence MQSFKICFFISCLSVVLVKG. The propeptide occupies 21–47; that stretch reads QFGGTVSSNPNGGLDVNARLSKTIGDP.

Hemolymph and fat body.

The protein resides in the secreted. In terms of biological role, hemolymph antibacterial protein against Gram-negative bacteria. The protein is Attacin-A of Glossina morsitans morsitans (Savannah tsetse fly).